A 123-amino-acid polypeptide reads, in one-letter code: Large ribosomal subunit protein bL12 (123 aa).

The protein belongs to the bacterial ribosomal protein bL12 family. In terms of assembly, homodimer. Part of the ribosomal stalk of the 50S ribosomal subunit. Forms a multimeric L10(L12)X complex, where L10 forms an elongated spine to which 2 to 4 L12 dimers bind in a sequential fashion. Binds GTP-bound translation factors.

Forms part of the ribosomal stalk which helps the ribosome interact with GTP-bound translation factors. Is thus essential for accurate translation. In Hydrogenovibrio crunogenus (strain DSM 25203 / XCL-2) (Thiomicrospira crunogena), this protein is Large ribosomal subunit protein bL12.